The following is a 388-amino-acid chain: 3-dehydroquinate synthase (388 aa).

Belongs to the archaeal-type DHQ synthase family.

It carries out the reaction 2-amino-2,3,7-trideoxy-D-lyxo-hept-6-ulosonate + NAD(+) + H2O = 3-dehydroquinate + NH4(+) + NADH + H(+). Functionally, catalyzes the oxidative deamination and cyclization of 2-amino-3,7-dideoxy-D-threo-hept-6-ulosonic acid (ADH) to yield 3-dehydroquinate (DHQ), which is fed into the canonical shikimic pathway of aromatic amino acid biosynthesis. The chain is 3-dehydroquinate synthase from Haloarcula marismortui (strain ATCC 43049 / DSM 3752 / JCM 8966 / VKM B-1809) (Halobacterium marismortui).